The primary structure comprises 322 residues: Protein SEC13 homolog (322 aa).

V2 bears the N-acetylvaline mark. WD repeat units follow at residues 11–50 (SHED…QILI), 55–96 (GHEG…WEKS), 101–144 (GHDS…EVKK), 148–204 (AHTI…QWKE), 210–253 (AHSD…SNTW), and 260–299 (KFND…QWVC). Phosphoserine is present on S184. Residue S309 is modified to Phosphoserine.

It belongs to the WD repeat SEC13 family. In terms of assembly, at the nuclear pore: component of the Y-shaped Nup107-160 subcomplex of the nuclear pore complex (NPC). The Nup107-160 subcomplex includes NUP160, NUP133, NUP107, NUP98, NUP85, NUP43, NUP37, SEH1 and SEC13. At the COPII coat complex: interacts with SEC31A and SEC31B. Interacts with SEC16A. Interacts with SEC16B. Component of the GATOR2 subcomplex, composed of MIOS, SEC13, SEH1L, WDR24 and WDR59. The GATOR2 complex interacts with CASTOR1 and CASTOR2; the interaction is negatively regulated by arginine. The GATOR2 complex interacts with SESN1, SESN2 and SESN3; the interaction is negatively regulated by amino acids.

Its subcellular location is the cytoplasmic vesicle. The protein resides in the COPII-coated vesicle membrane. It is found in the endoplasmic reticulum membrane. It localises to the nucleus. The protein localises to the nuclear pore complex. Its subcellular location is the lysosome membrane. The GATOR2 complex is negatively regulated by the upstream amino acid sensors CASTOR1 and SESN2, which sequester the GATOR2 complex in absence of amino acids. In the presence of abundant amino acids, GATOR2 is released from CASTOR1 and SESN2 and activated. Functions as a component of the nuclear pore complex (NPC) and the COPII coat. At the endoplasmic reticulum, SEC13 is involved in the biogenesis of COPII-coated vesicles. Required for the exit of adipsin (CFD/ADN), an adipocyte-secreted protein from the endoplasmic reticulum. In terms of biological role, as a component of the GATOR2 complex, functions as an activator of the amino acid-sensing branch of the mTORC1 signaling pathway. The GATOR2 complex indirectly activates mTORC1 through the inhibition of the GATOR1 subcomplex. GATOR2 probably acts as an E3 ubiquitin-protein ligase toward GATOR1. In the presence of abundant amino acids, the GATOR2 complex mediates ubiquitination of the NPRL2 core component of the GATOR1 complex, leading to GATOR1 inactivation. In the absence of amino acids, GATOR2 is inhibited, activating the GATOR1 complex. Within the GATOR2 complex, SEC13 and SEH1L are required to stabilize the complex. This chain is Protein SEC13 homolog, found in Homo sapiens (Human).